We begin with the raw amino-acid sequence, 816 residues long: Leucine--tRNA ligase (816 aa).

Positions 40–51 (SYPSGSQLHAGH) match the 'HIGH' region motif. Residues 576-580 (KMSKS) carry the 'KMSKS' region motif. An ATP-binding site is contributed by Lys579.

The protein belongs to the class-I aminoacyl-tRNA synthetase family.

It localises to the cytoplasm. The catalysed reaction is tRNA(Leu) + L-leucine + ATP = L-leucyl-tRNA(Leu) + AMP + diphosphate. The sequence is that of Leucine--tRNA ligase from Clostridium perfringens (strain SM101 / Type A).